A 446-amino-acid chain; its full sequence is Pre-rRNA-processing protein crb3/ipi3 (446 aa).

WD repeat units follow at residues 74–113, 116–155, 172–214, 216–257, and 294–333; these read ILPE…LIYF, AHYQ…DQNS, GHKR…LLTT, ALPS…SNNV, and SCQS…VLRR.

Belongs to the WD repeat IPI3/WDR18 family. In terms of assembly, component of the RIX1 complex, composed of ipi1, rix1/ipi2 and crb3/ipi3 in a 1:2:2 stoichiometry. The complex interacts (via rix1) with mdn1 (via its hexameric AAA ATPase ring) and the pre-60S ribosome particles. Interacts with rix1, gcr3 and Las1.

It localises to the nucleus. Its subcellular location is the chromosome. Required for both pre-rRNA processing and heterochromatic gene silencing. Functionally, component of the RIX1 complex required for processing of ITS2 sequences from 35S pre-rRNA. This Schizosaccharomyces pombe (strain 972 / ATCC 24843) (Fission yeast) protein is Pre-rRNA-processing protein crb3/ipi3 (crb3).